The chain runs to 216 residues: Protein ADP-ribose pyrophosphatase ORF38 (216 aa).

A Nudix hydrolase domain is found at 1–177 (MRNAAGLFMI…DYSNYIEFFD (177 aa)). The short motif at 48 to 70 (GHRDCCDAKVYETAVREFVEETG) is the Nudix box element.

The protein resides in the host cytoplasm. Its subcellular location is the host nucleus. The enzyme catalyses ADP-D-ribose + H2O = D-ribose 5-phosphate + AMP + 2 H(+). Plays an important role in virus replication most probably through its hydrolyzing ADP-ribose activity in host cells. May function in viral DNA replication or transcription directly, or by removing toxic substances or metabolic intermediates. This is Protein ADP-ribose pyrophosphatase ORF38 from Lepidoptera (butterflies and moths).